The primary structure comprises 343 residues: 3-dehydroquinate synthase (343 aa).

Residues serine 61–lysine 66, glycine 95–aspartate 99, threonine 119–threonine 120, lysine 132, lysine 141, and phenylalanine 159–threonine 162 contribute to the NAD(+) site. Residues glutamate 174, histidine 231, and histidine 248 each coordinate Zn(2+).

Belongs to the sugar phosphate cyclases superfamily. Dehydroquinate synthase family. The cofactor is Co(2+). Requires Zn(2+) as cofactor. NAD(+) serves as cofactor.

The protein localises to the cytoplasm. The enzyme catalyses 7-phospho-2-dehydro-3-deoxy-D-arabino-heptonate = 3-dehydroquinate + phosphate. The protein operates within metabolic intermediate biosynthesis; chorismate biosynthesis; chorismate from D-erythrose 4-phosphate and phosphoenolpyruvate: step 2/7. In terms of biological role, catalyzes the conversion of 3-deoxy-D-arabino-heptulosonate 7-phosphate (DAHP) to dehydroquinate (DHQ). The chain is 3-dehydroquinate synthase from Helicobacter pylori (strain HPAG1).